The sequence spans 223 residues: Uridylate kinase (223 aa).

9–10 (GS) is a binding site for ATP. Gly-42 contacts UMP. Positions 43 and 47 each coordinate ATP. Residues Asp-64 and 112–118 (VSPGQTT) contribute to the UMP site. Residues Thr-138, Tyr-144, and Asp-147 each coordinate ATP.

This sequence belongs to the UMP kinase family. Homohexamer.

The protein resides in the cytoplasm. It carries out the reaction UMP + ATP = UDP + ADP. Its pathway is pyrimidine metabolism; CTP biosynthesis via de novo pathway; UDP from UMP (UMPK route): step 1/1. With respect to regulation, inhibited by UTP. In terms of biological role, catalyzes the reversible phosphorylation of UMP to UDP. This Methanothrix thermoacetophila (strain DSM 6194 / JCM 14653 / NBRC 101360 / PT) (Methanosaeta thermophila) protein is Uridylate kinase.